The sequence spans 423 residues: MKKSKRKNAQAQEAQETEVLVQEEAEELPEFPEGEPDPDLEDPDLALEDDLLDLPEEGEGLDLEEEEEDLPIPKISTSDPVRQYLHEIGQVPLLTLEEEVELARKVEEGMEAIKKLSEITGLDPDLIREVVRAKILGSARVRHIPGLKETLDPKTVEEIDQKLKSLPKEHKRYLHIAREGEAARQHLIEANLRLVVSIAKKYTGRGLSFLDLIQEGNQGLIRAVEKFEYKRRFKFSTYATWWIRQAINRAIADQARTIRIPVHMVETINKLSRTARQLQQELGREPTYEEIAEAMGPGWDAKRVEETLKIAQEPVSLETPIGDEKDSFYGDFIPDEHLPSPVDAATQSLLSEELEKALSKLSEREAMVLKLRKGLIDGREHTLEEVGAFFGVTRERIRQIENKALRKLKYHESRTRKLRDFLD.

A disordered region spans residues 1–76 (MKKSKRKNAQ…EEDLPIPKIS (76 aa)). Residues 21–70 (VQEEAEELPEFPEGEPDPDLEDPDLALEDDLLDLPEEGEGLDLEEEEEDL) show a composition bias toward acidic residues. The tract at residues 78–113 (SDPVRQYLHEIGQVPLLTLEEEVELARKVEEGMEAI) is sigma-70 factor domain-1. Residues 187–257 (LIEANLRLVV…NRAIADQART (71 aa)) form a sigma-70 factor domain-2 region. Residues 211 to 214 (DLIQ) carry the Interaction with polymerase core subunit RpoC motif. Residues 266 to 344 (ETINKLSRTA…DEHLPSPVDA (79 aa)) are sigma-70 factor domain-3. A sigma-70 factor domain-4 region spans residues 357–409 (ALSKLSEREAMVLKLRKGLIDGREHTLEEVGAFFGVTRERIRQIENKALRKLK). The H-T-H motif DNA-binding region spans 383 to 402 (LEEVGAFFGVTRERIRQIEN).

Belongs to the sigma-70 factor family. RpoD/SigA subfamily. As to quaternary structure, interacts transiently with the RNA polymerase catalytic core formed by RpoA, RpoB, RpoC and RpoZ (2 alpha, 1 beta, 1 beta' and 1 omega subunit) to form the RNA polymerase holoenzyme that can initiate transcription.

The protein localises to the cytoplasm. Functionally, sigma factors are initiation factors that promote the attachment of RNA polymerase to specific initiation sites and are then released. This sigma factor is the primary sigma factor during exponential growth. The sequence is that of RNA polymerase sigma factor SigA from Thermus thermophilus (strain ATCC BAA-163 / DSM 7039 / HB27).